The following is a 254-amino-acid chain: Ribosomal RNA small subunit methyltransferase J (254 aa).

Residues 106–107 (RD) and D177 each bind S-adenosyl-L-methionine.

The protein belongs to the methyltransferase superfamily. RsmJ family.

It is found in the cytoplasm. The enzyme catalyses guanosine(1516) in 16S rRNA + S-adenosyl-L-methionine = N(2)-methylguanosine(1516) in 16S rRNA + S-adenosyl-L-homocysteine + H(+). Functionally, specifically methylates the guanosine in position 1516 of 16S rRNA. This chain is Ribosomal RNA small subunit methyltransferase J, found in Nitrosococcus oceani (strain ATCC 19707 / BCRC 17464 / JCM 30415 / NCIMB 11848 / C-107).